The sequence spans 375 residues: Chaperone protein DnaJ (375 aa).

Residues Asp-5–Gly-70 form the J domain. A CR-type zinc finger spans residues Gly-134–Ser-212. The Zn(2+) site is built by Cys-147, Cys-150, Cys-164, Cys-167, Cys-186, Cys-189, Cys-200, and Cys-203. CXXCXGXG motif repeat units lie at residues Cys-147–Gly-154, Cys-164–Gly-171, Cys-186–Gly-193, and Cys-200–Gly-207.

Belongs to the DnaJ family. In terms of assembly, homodimer. Requires Zn(2+) as cofactor.

Its subcellular location is the cytoplasm. Participates actively in the response to hyperosmotic and heat shock by preventing the aggregation of stress-denatured proteins and by disaggregating proteins, also in an autonomous, DnaK-independent fashion. Unfolded proteins bind initially to DnaJ; upon interaction with the DnaJ-bound protein, DnaK hydrolyzes its bound ATP, resulting in the formation of a stable complex. GrpE releases ADP from DnaK; ATP binding to DnaK triggers the release of the substrate protein, thus completing the reaction cycle. Several rounds of ATP-dependent interactions between DnaJ, DnaK and GrpE are required for fully efficient folding. Also involved, together with DnaK and GrpE, in the DNA replication of plasmids through activation of initiation proteins. The sequence is that of Chaperone protein DnaJ from Ectopseudomonas mendocina (strain ymp) (Pseudomonas mendocina).